We begin with the raw amino-acid sequence, 114 residues long: UPF0145 protein PF1756 (114 aa).

Belongs to the UPF0145 family.

The protein is UPF0145 protein PF1756 of Pyrococcus furiosus (strain ATCC 43587 / DSM 3638 / JCM 8422 / Vc1).